Consider the following 176-residue polypeptide: NAD(P)H-quinone oxidoreductase subunit 6, chloroplastic (176 aa).

5 consecutive transmembrane segments (helical) span residues 10 to 30, 32 to 52, 61 to 81, 92 to 112, and 152 to 172; these read FLLV…VLLT, PIFS…FFSL, AQLL…VMFM, LWTV…ISLI, and FFLP…GAIA.

It belongs to the complex I subunit 6 family. NDH is composed of at least 16 different subunits, 5 of which are encoded in the nucleus.

It localises to the plastid. The protein localises to the chloroplast thylakoid membrane. It carries out the reaction a plastoquinone + NADH + (n+1) H(+)(in) = a plastoquinol + NAD(+) + n H(+)(out). The catalysed reaction is a plastoquinone + NADPH + (n+1) H(+)(in) = a plastoquinol + NADP(+) + n H(+)(out). Functionally, NDH shuttles electrons from NAD(P)H:plastoquinone, via FMN and iron-sulfur (Fe-S) centers, to quinones in the photosynthetic chain and possibly in a chloroplast respiratory chain. The immediate electron acceptor for the enzyme in this species is believed to be plastoquinone. Couples the redox reaction to proton translocation, and thus conserves the redox energy in a proton gradient. The chain is NAD(P)H-quinone oxidoreductase subunit 6, chloroplastic (ndhG) from Oenothera argillicola (Appalachian evening primrose).